The sequence spans 153 residues: Endoribonuclease YbeY (153 aa).

Zn(2+) is bound by residues H113, H117, and H123.

Belongs to the endoribonuclease YbeY family. The cofactor is Zn(2+).

Its subcellular location is the cytoplasm. Functionally, single strand-specific metallo-endoribonuclease involved in late-stage 70S ribosome quality control and in maturation of the 3' terminus of the 16S rRNA. The chain is Endoribonuclease YbeY from Aliivibrio fischeri (strain ATCC 700601 / ES114) (Vibrio fischeri).